The primary structure comprises 96 residues: Dynein light chain roadblock-type 1 (96 aa).

Ala-2 is modified (N-acetylalanine).

Belongs to the GAMAD family. As to quaternary structure, homodimer. The cytoplasmic dynein 1 complex consists of two catalytic heavy chains (HCs) and a number of non-catalytic subunits presented by intermediate chains (ICs), light intermediate chains (LICs) and light chains (LCs); the composition seems to vary in respect to the IC, LIC and LC composition. The heavy chain homodimer serves as a scaffold for the probable homodimeric assembly of the respective non-catalytic subunits. The ICs and LICs bind directly to the HC dimer and the LCs assemble on the IC dimer. Interacts with DYNLRB2. Interacts with DYNC1I1 and DYNC1I2. Interacts with RAB6A isoform 1 (GTP-bound); the interaction is direct. Interacts with RAB6A isoform 2 (GDP-bound); the interaction is direct. Interacts with RAB6B (GDP-bound).

It is found in the cytoplasm. Its subcellular location is the cytoskeleton. Functionally, acts as one of several non-catalytic accessory components of the cytoplasmic dynein 1 complex that are thought to be involved in linking dynein to cargos and to adapter proteins that regulate dynein function. Cytoplasmic dynein 1 acts as a motor for the intracellular retrograde motility of vesicles and organelles along microtubules. The sequence is that of Dynein light chain roadblock-type 1 (Dynlrb1) from Mus musculus (Mouse).